Consider the following 285-residue polypeptide: Shikimate dehydrogenase (NADP(+)) (285 aa).

Shikimate contacts are provided by residues 19–21 (SLS) and T66. Residue K70 is the Proton acceptor of the active site. 2 residues coordinate shikimate: N91 and D107. Residues 129–133 (GSGGA) and L228 each bind NADP(+). Residue Y230 participates in shikimate binding. G251 lines the NADP(+) pocket.

It belongs to the shikimate dehydrogenase family. Homodimer.

The catalysed reaction is shikimate + NADP(+) = 3-dehydroshikimate + NADPH + H(+). Its pathway is metabolic intermediate biosynthesis; chorismate biosynthesis; chorismate from D-erythrose 4-phosphate and phosphoenolpyruvate: step 4/7. Its function is as follows. Involved in the biosynthesis of the chorismate, which leads to the biosynthesis of aromatic amino acids. Catalyzes the reversible NADPH linked reduction of 3-dehydroshikimate (DHSA) to yield shikimate (SA). The sequence is that of Shikimate dehydrogenase (NADP(+)) from Prochlorococcus marinus subsp. pastoris (strain CCMP1986 / NIES-2087 / MED4).